We begin with the raw amino-acid sequence, 326 residues long: Ornithine carbamoyltransferase (326 aa).

Residues 57–60 (STRT), Gln-84, Arg-108, and 135–138 (HPTQ) contribute to the carbamoyl phosphate site. Residues Asn-169, Asp-233, and 237-238 (SM) each bind L-ornithine. Position 275 to 276 (275 to 276 (CL)) interacts with carbamoyl phosphate.

The protein belongs to the aspartate/ornithine carbamoyltransferase superfamily. OTCase family.

It is found in the cytoplasm. The enzyme catalyses carbamoyl phosphate + L-ornithine = L-citrulline + phosphate + H(+). Its pathway is amino-acid biosynthesis; L-arginine biosynthesis; L-arginine from L-ornithine and carbamoyl phosphate: step 1/3. Reversibly catalyzes the transfer of the carbamoyl group from carbamoyl phosphate (CP) to the N(epsilon) atom of ornithine (ORN) to produce L-citrulline. The chain is Ornithine carbamoyltransferase from Escherichia coli O6:K15:H31 (strain 536 / UPEC).